Reading from the N-terminus, the 229-residue chain is Interleukin-27 subunit beta (229 aa).

The first 20 residues, 1–20, serve as a signal peptide directing secretion; the sequence is MTPQLLLALVLWASCPPCSG. 2 Fibronectin type-III domains span residues 24–130 and 131–227; these read PPAA…IKPD and PPEG…TMSL. 2 N-linked (GlcNAc...) asparagine glycosylation sites follow: Asn-55 and Asn-105.

Belongs to the type I cytokine receptor family. Type 3 subfamily. Heterodimer with IL27/IL27A; not disulfide-linked. This heterodimer is known as interleukin IL-27. Heterodimer with IL12A; not disulfide-linked. This heterodimer is known as interleukin IL-35. Interacts with SQSTM1.

The protein resides in the secreted. In terms of biological role, associates with IL27 to form the IL-27 interleukin, a heterodimeric cytokine which functions in innate immunity. IL-27 has pro- and anti-inflammatory properties, that can regulate T-helper cell development, suppress T-cell proliferation, stimulate cytotoxic T-cell activity, induce isotype switching in B-cells, and that has diverse effects on innate immune cells. Among its target cells are CD4 T-helper cells which can differentiate in type 1 effector cells (TH1), type 2 effector cells (TH2) and IL17 producing helper T-cells (TH17). It drives rapid clonal expansion of naive but not memory CD4 T-cells. It also strongly synergizes with IL-12 to trigger interferon-gamma/IFN-gamma production of naive CD4 T-cells, binds to the cytokine receptor WSX-1/TCCR. Another important role of IL-27 is its antitumor activity as well as its antiangiogenic activity with activation of production of antiangiogenic chemokines. This is Interleukin-27 subunit beta (EBI3) from Homo sapiens (Human).